The sequence spans 248 residues: Probable transcriptional regulatory protein Rsph17025_0577 (248 aa).

The disordered stretch occupies residues 1 to 21 (MAGHSKWANIQHRKGKQDKLR).

It belongs to the TACO1 family.

The protein resides in the cytoplasm. The protein is Probable transcriptional regulatory protein Rsph17025_0577 of Cereibacter sphaeroides (strain ATCC 17025 / ATH 2.4.3) (Rhodobacter sphaeroides).